Reading from the N-terminus, the 104-residue chain is SOSS complex subunit C (104 aa).

Position 2 is an N-acetylalanine (Ala2).

This sequence belongs to the SOSS-C family. In terms of assembly, component of the SOSS complex, composed of SOSS-B (SOSS-B1/NABP2 or SOSS-B2/NABP1), SOSS-A/INTS3 and SOSS-C/INIP. SOSS complexes containing SOSS-B1/NABP2 are more abundant than complexes containing SOSS-B2/NABP1. Interacts with INTS3; the interaction is direct.

The protein resides in the nucleus. Component of the SOSS complex, a multiprotein complex that functions downstream of the MRN complex to promote DNA repair and G2/M checkpoint. The SOSS complex associates with single-stranded DNA at DNA lesions and influences diverse endpoints in the cellular DNA damage response including cell-cycle checkpoint activation, recombinational repair and maintenance of genomic stability. Required for efficient homologous recombination-dependent repair of double-strand breaks (DSBs) and ATM-dependent signaling pathways. In Bos taurus (Bovine), this protein is SOSS complex subunit C (INIP).